A 571-amino-acid polypeptide reads, in one-letter code: Probable serine/threonine-protein kinase WNK4 (571 aa).

Residues 19-277 (GRFAEILGRG…AKELLQDPFL (259 aa)) form the Protein kinase domain. Residues 99 to 102 (TELF) and Lys-149 contribute to the ATP site. The active-site Proton acceptor is Asp-166. The disordered stretch occupies residues 396–425 (EDDETPHDHHRHRTDSFHSSSSHASSSQAS). The span at 412–425 (FHSSSSHASSSQAS) shows a compositional bias: low complexity. Ser-522 carries the phosphoserine modification.

It belongs to the protein kinase superfamily. Ser/Thr protein kinase family. WNK subfamily.

It carries out the reaction L-seryl-[protein] + ATP = O-phospho-L-seryl-[protein] + ADP + H(+). The enzyme catalyses L-threonyl-[protein] + ATP = O-phospho-L-threonyl-[protein] + ADP + H(+). In terms of biological role, may regulate flowering time by modulating the photoperiod pathway. In Arabidopsis thaliana (Mouse-ear cress), this protein is Probable serine/threonine-protein kinase WNK4 (WNK4).